The sequence spans 233 residues: Hydroxyacylglutathione hydrolase (233 aa).

Positions 52, 54, 56, 57, 108, 125, and 163 each coordinate Zn(2+).

Belongs to the metallo-beta-lactamase superfamily. Glyoxalase II family. As to quaternary structure, monomer. Requires Zn(2+) as cofactor.

It catalyses the reaction an S-(2-hydroxyacyl)glutathione + H2O = a 2-hydroxy carboxylate + glutathione + H(+). Its pathway is secondary metabolite metabolism; methylglyoxal degradation; (R)-lactate from methylglyoxal: step 2/2. Its function is as follows. Thiolesterase that catalyzes the hydrolysis of S-D-lactoyl-glutathione to form glutathione and D-lactic acid. This chain is Hydroxyacylglutathione hydrolase, found in Pasteurella multocida (strain Pm70).